Here is a 296-residue protein sequence, read N- to C-terminus: Nucleotide-binding protein RSc0403 (296 aa).

8–15 (GMSGSGKS) is a binding site for ATP. GTP is bound at residue 57–60 (DIRS). The disordered stretch occupies residues 99–124 (TRRRHPLSIRNGRPDAGNPPSAAKGP).

Belongs to the RapZ-like family.

In terms of biological role, displays ATPase and GTPase activities. The chain is Nucleotide-binding protein RSc0403 from Ralstonia nicotianae (strain ATCC BAA-1114 / GMI1000) (Ralstonia solanacearum).